We begin with the raw amino-acid sequence, 715 residues long: DNA mismatch repair protein MLH3 (715 aa).

This sequence belongs to the DNA mismatch repair MutL/HexB family. As to quaternary structure, heterodimer of MLH1 and MLH3, called MutLbeta, which is involved in correction of a specific subset of IDLs when associated with MutSbeta. Forms a ternary complex with a SGS1-TOP3 heterodimer during meiosis.

It is found in the nucleus. Its function is as follows. Involved in DNA mismatch repair (MMR), correcting insertion-deletion loops (IDLs) resulting from DNA replication, DNA damage or from recombination events between non-identical sequences during meiosis. Component of the MutLbeta heterodimer, which probably forms a ternary complex with the MutSbeta heterodimer that initially recognizes the DNA mismatches. This complex is thought to be responsible for directing the downstream MMR events, including strand discrimination, excision, and resynthesis. Plays a major role in promoting meiotic crossing-over and is involved in maintaining the genetic stability of simple sequence repeats by correction of frameshift intermediates. The protein is DNA mismatch repair protein MLH3 (MLH3) of Saccharomyces cerevisiae (strain ATCC 204508 / S288c) (Baker's yeast).